A 179-amino-acid polypeptide reads, in one-letter code: Large ribosomal subunit protein bL9 (179 aa).

The protein belongs to the bacterial ribosomal protein bL9 family.

Functionally, binds to the 23S rRNA. The polypeptide is Large ribosomal subunit protein bL9 (Bartonella bacilliformis (strain ATCC 35685 / KC583 / Herrer 020/F12,63)).